The chain runs to 467 residues: Asparagine--tRNA ligase (467 aa).

It belongs to the class-II aminoacyl-tRNA synthetase family. As to quaternary structure, homodimer.

The protein localises to the cytoplasm. It catalyses the reaction tRNA(Asn) + L-asparagine + ATP = L-asparaginyl-tRNA(Asn) + AMP + diphosphate + H(+). The sequence is that of Asparagine--tRNA ligase from Glaesserella parasuis serovar 5 (strain SH0165) (Haemophilus parasuis).